The primary structure comprises 203 residues: Hydra actinoporin-like toxin 2 (203 aa).

A signal peptide spans 1 to 21; it reads MLSYLCFGCFLVSASLEIACG. The short motif at 175-177 is the Cell attachment site element; it reads RGG.

Belongs to the actinoporin family. HALT subfamily. As to quaternary structure, octamer or nonamer in membranes. Monomer in the soluble state. In vitro, interacts with folate receptor alpha (of target organism). In terms of tissue distribution, strongly expressed in the gland and mucous cells in the endoderm.

Its subcellular location is the nematocyst. It localises to the secreted. The protein resides in the target cell membrane. Pore-forming protein that forms hydrophilic pores and causes cytolysis. Compared to equinatoxin-2 (AC P61914), it reveals lower cytolysis activity (5-12-fold difference, tested on erythrocytes), a larger pore size (probably 2-3 nm) and different affinity to membrane lipids (100-fold lower affinity to sphingomyelin). Binds to sulfatides (SFT). Shows cytolytic activity on HeLa cells, with a different potency than its paralogs (from most potent to less potent: HALT-4&gt;HALT-6~HALT-1&gt;HALT-3&gt;HALT-7&gt;HALT-2). Pore formation is a multi-step process that involves specific recognition of membrane lipid by a protein aromatic residues rich region, firm binding to the membrane (mainly driven by hydrophobic interactions) accompanied by the transfer of the N-terminal region to the lipid-water interface and finally pore formation after oligomerization of monomers. In vitro, binds to the folate receptor alpha (FOLR1), a GPI-anchored membrane protein that plays a major role in the uptake of folate/folic acid into cells via endocytosis, suggesting a possible involvement of this receptor in the mechanism of HALT-1-induced cell lysis. In vivo, does not cause visible paralysis in larvae of the blowfly Sarcophaga faculata, the most common arthropod prey of Hydra. This Hydra vulgaris (Hydra) protein is Hydra actinoporin-like toxin 2.